A 290-amino-acid polypeptide reads, in one-letter code: uncharacterized protein (290 aa).

This is an uncharacterized protein from Escherichia coli (strain K12).